The following is a 115-amino-acid chain: Tyrosine-protein phosphatase 22 (115 aa).

One can recognise a Tyrosine-protein phosphatase domain in the interval 1 to 115 (WLMIVEQKCR…ETGGDAPMVV (115 aa)). Residue Asp-83 participates in substrate binding.

It belongs to the protein-tyrosine phosphatase family.

It catalyses the reaction O-phospho-L-tyrosyl-[protein] + H2O = L-tyrosyl-[protein] + phosphate. The protein is Tyrosine-protein phosphatase 22 (STY-22) of Styela plicata (Wrinkled sea squirt).